Here is a 160-residue protein sequence, read N- to C-terminus: Phosphopantetheine adenylyltransferase (160 aa).

A substrate-binding site is contributed by S9. ATP-binding positions include 9-10 (SL) and H17. Substrate contacts are provided by K41, L74, and K88. ATP is bound by residues 89 to 91 (GIR), E99, and 123 to 129 (YLHLSST).

This sequence belongs to the bacterial CoaD family. In terms of assembly, homohexamer. Requires Mg(2+) as cofactor.

It localises to the cytoplasm. The enzyme catalyses (R)-4'-phosphopantetheine + ATP + H(+) = 3'-dephospho-CoA + diphosphate. It participates in cofactor biosynthesis; coenzyme A biosynthesis; CoA from (R)-pantothenate: step 4/5. Its function is as follows. Reversibly transfers an adenylyl group from ATP to 4'-phosphopantetheine, yielding dephospho-CoA (dPCoA) and pyrophosphate. In Renibacterium salmoninarum (strain ATCC 33209 / DSM 20767 / JCM 11484 / NBRC 15589 / NCIMB 2235), this protein is Phosphopantetheine adenylyltransferase.